A 131-amino-acid chain; its full sequence is Large ribosomal subunit protein bL12 (131 aa).

This sequence belongs to the bacterial ribosomal protein bL12 family. In terms of assembly, homodimer. Part of the ribosomal stalk of the 50S ribosomal subunit. Forms a multimeric L10(L12)X complex, where L10 forms an elongated spine to which 2 to 4 L12 dimers bind in a sequential fashion. Binds GTP-bound translation factors.

Functionally, forms part of the ribosomal stalk which helps the ribosome interact with GTP-bound translation factors. Is thus essential for accurate translation. This is Large ribosomal subunit protein bL12 from Prochlorococcus marinus (strain MIT 9313).